The chain runs to 498 residues: UDP-N-acetylmuramoylalanine--D-glutamate ligase (498 aa).

Position 119–125 (119–125) interacts with ATP; that stretch reads GTNGKST.

This sequence belongs to the MurCDEF family.

The protein localises to the cytoplasm. The catalysed reaction is UDP-N-acetyl-alpha-D-muramoyl-L-alanine + D-glutamate + ATP = UDP-N-acetyl-alpha-D-muramoyl-L-alanyl-D-glutamate + ADP + phosphate + H(+). It participates in cell wall biogenesis; peptidoglycan biosynthesis. Cell wall formation. Catalyzes the addition of glutamate to the nucleotide precursor UDP-N-acetylmuramoyl-L-alanine (UMA). The polypeptide is UDP-N-acetylmuramoylalanine--D-glutamate ligase (Wolbachia sp. subsp. Brugia malayi (strain TRS)).